The chain runs to 124 residues: UPF0102 protein Rcas_2007 (124 aa).

It belongs to the UPF0102 family.

This is UPF0102 protein Rcas_2007 from Roseiflexus castenholzii (strain DSM 13941 / HLO8).